A 220-amino-acid polypeptide reads, in one-letter code: UPF0502 protein Pnap_3223 (220 aa).

This sequence belongs to the UPF0502 family.

This Polaromonas naphthalenivorans (strain CJ2) protein is UPF0502 protein Pnap_3223.